Reading from the N-terminus, the 331-residue chain is Type 2 lactosamine alpha-2,3-sialyltransferase (331 aa).

The Cytoplasmic segment spans residues 1–4; sequence MKGY. The helical; Signal-anchor for type II membrane protein transmembrane segment at 5 to 25 threads the bilayer; that stretch reads VVAIFLSSIFLYYVLYCILWG. Residues 26–331 lie on the Lumenal side of the membrane; sequence TNGYWFPNEE…KKMVINLTQN (306 aa). N-linked (GlcNAc...) asparagine glycans are attached at residues asparagine 129, asparagine 181, asparagine 295, asparagine 308, and asparagine 327.

The protein belongs to the glycosyltransferase 29 family.

It localises to the golgi apparatus membrane. The catalysed reaction is a neolactoside nLc4Cer(d18:1(4E)) + CMP-N-acetyl-beta-neuraminate = a neolactoside IV(3)-alpha-NeuAc-nLc4Cer(d18:1(4E)) + CMP + H(+). It carries out the reaction a beta-D-galactosyl-(1-&gt;4)-N-acetyl-beta-D-glucosaminyl derivative + CMP-N-acetyl-beta-neuraminate = an N-acetyl-alpha-neuraminyl-(2-&gt;3)-beta-D-galactosyl-(1-&gt;4)-N-acetyl-beta-D-glucosaminyl derivative + CMP + H(+). The enzyme catalyses a neolactoside nLc6Cer(d18:1(4E)) + CMP-N-acetyl-beta-neuraminate = a neolactoside VI(3)-alpha-NeuNAc-nLc6Cer(d18:1(4E)) + CMP + H(+). Functionally, transfers the sialyl residue from CMP-N-acetyl-beta-neuraminate to the terminal galactose residue on sugar chains of glycoproteins and glycolipids. It's alpha-2,3-sialyltransferase activity is specific toward type II glycan chains (Galbeta1-4GlcNAc) on glycoproteins and glycolipids such as neolactosides nLc4Cer and nLc6Cer, whose sialyl-products serve as precursors for the Lewis X antigen. Critically involved in the synthesis of functional selectin ligands needed for neutrophil recruitment during inflammation and lymphocyte homing to the lymph nodes. The chain is Type 2 lactosamine alpha-2,3-sialyltransferase (St3gal6) from Rattus norvegicus (Rat).